A 152-amino-acid polypeptide reads, in one-letter code: MTITDLVLILFIAALLAFAIYDQFIMPRRNGPTLLAIPLLRRGRIDSVIFVGLIVILIYNNVTNHGALITTWLLSALALMGFYIFWIRVPKIIFKQKGFFFANVWIEYSLIKAMNLSEDGVLVMQLEQRRLLIRVRNIDNLEKIYKLIVSTQ.

The next 3 helical transmembrane spans lie at 6–26, 45–65, and 67–87; these read LVLI…QFIM, IDSV…VTNH, and ALIT…IFWI.

It belongs to the UPF0266 family.

The protein resides in the cell inner membrane. The protein is UPF0266 membrane protein YobD of Shigella boydii serotype 18 (strain CDC 3083-94 / BS512).